We begin with the raw amino-acid sequence, 277 residues long: NAD kinase (277 aa).

Residue aspartate 55 is the Proton acceptor of the active site. Residues 55–56, 131–132, arginine 157, aspartate 159, and 170–175 each bind NAD(+); these read DG, NE, and TAYNKS.

The protein belongs to the NAD kinase family. It depends on a divalent metal cation as a cofactor.

It localises to the cytoplasm. The catalysed reaction is NAD(+) + ATP = ADP + NADP(+) + H(+). Its function is as follows. Involved in the regulation of the intracellular balance of NAD and NADP, and is a key enzyme in the biosynthesis of NADP. Catalyzes specifically the phosphorylation on 2'-hydroxyl of the adenosine moiety of NAD to yield NADP. The sequence is that of NAD kinase from Streptococcus mutans serotype c (strain ATCC 700610 / UA159).